The sequence spans 509 residues: Glucose-1-phosphate adenylyltransferase large subunit 4, chloroplastic/amyloplastic (509 aa).

Residues 1–36 constitute a chloroplast transit peptide; the sequence is MATCSWAATTAAAAPPRPPARCRSRVAALRRTAAAS.

It belongs to the bacterial/plant glucose-1-phosphate adenylyltransferase family. In terms of assembly, heterotetramer composed of two small and two large subunits. Expressed in leaves and stems.

Its subcellular location is the plastid. It is found in the chloroplast. The enzyme catalyses alpha-D-glucose 1-phosphate + ATP + H(+) = ADP-alpha-D-glucose + diphosphate. The protein operates within glycan biosynthesis; starch biosynthesis. Its activity is regulated as follows. Activated by 3'phosphoglycerate, inhibited by orthophosphate. Allosteric regulation. Involved in synthesis of starch. Catalyzes the synthesis of ADP-glucose, a molecule that serves as an activated glycosyl donor for alpha-1,4-glucan synthesis. Essential for starch synthesis in leaf chloroplasts. The sequence is that of Glucose-1-phosphate adenylyltransferase large subunit 4, chloroplastic/amyloplastic from Oryza sativa subsp. japonica (Rice).